The sequence spans 1231 residues: RNA-binding protein 33 (1231 aa).

Residues 1 to 13 (MAAALGAGGGAGA) show a composition bias toward gly residues. Disordered stretches follow at residues 1-168 (MAAA…EEEQ) and 219-261 (SQVA…FKTE). Position 2 is an N-acetylalanine (Ala-2). The segment covering 20-36 (QFDKPGAERSWRRRAAD) has biased composition (basic and acidic residues). A compositionally biased stretch (acidic residues) spans 37-49 (EDWDSELEDDLLG). Phosphoserine is present on Ser-41. Positions 82 to 108 (FSSQGVTISLNTTSGIVTSFELSDNTN) are enriched in polar residues. Acidic residues-rich tracts occupy residues 112 to 124 (GEQE…GDDE) and 153 to 168 (LTED…EEEQ). Residues 224 to 240 (ETHEGGMETLELQKDIK) show a composition bias toward basic and acidic residues. Acidic residues predominate over residues 241-252 (EESDEEDDDDEE). A phosphoserine mark is found at Ser-243 and Ser-271. Disordered regions lie at residues 297–436 (FEER…KNIH) and 452–761 (PLLP…NLRE). Basic residues predominate over residues 305–316 (KQGRYGSRRGGR). A compositionally biased stretch (basic and acidic residues) spans 327-344 (GDQRRDNSERGRMKEHRP). Residues 360–379 (LIPPPQPQPPPPPPPPPPQQ) are compositionally biased toward pro residues. Over residues 380–398 (QPIRSLFQQQQLQPLLPLQ) the composition is skewed to low complexity. Pro residues predominate over residues 469–483 (FPGPPEFPQHTPGPV). At Arg-520 the chain carries Asymmetric dimethylarginine. 4 stretches are compositionally biased toward pro residues: residues 531–540 (SPPPPPPPPT), 604–618 (FIPP…PGQP), 632–647 (LHPP…PQPQ), and 661–682 (PLQP…PPQH). Polar residues-rich tracts occupy residues 713–728 (QTAQ…QCTP) and 736–759 (AASQ…NSNL). A phosphoserine mark is found at Ser-792 and Ser-816. Disordered regions lie at residues 796-840 (RAVV…ETRL), 876-932 (ERLA…FPGA), and 998-1080 (ETPH…MRQQ). A compositionally biased stretch (basic and acidic residues) spans 820–829 (QPKEEAKPEA). The stretch at 840 to 891 (LYRLKIEEQKRLREEILKQKELRRQQQAGARKKELLERLAQQQQQQQQQQHQ) forms a coiled coil. The span at 880-901 (QQQQQQQQQQHQPQQQQQQPQQ) shows a compositional bias: low complexity. A phosphoserine mark is found at Ser-1002 and Ser-1010. A Glycyl lysine isopeptide (Lys-Gly) (interchain with G-Cter in SUMO2) cross-link involves residue Lys-1019. Phosphoserine occurs at positions 1032 and 1051.

In terms of assembly, associates with the NXF1-NXT1 RNA export complex. Interacts with ALKBH5; facilitating ALKBH5 recruitment to m6A-containing transcripts. Interacts with SENP1; promoting ALKBH5 deSUMOylation and subsequent activation.

Its subcellular location is the nucleus. It localises to the cytoplasm. Its function is as follows. RNA reader protein, which recognizes and binds specific RNAs, thereby regulating RNA metabolic processes, such as mRNA export, mRNA stability and/or translation. Binds a subset of intronless RNAs containing GC-rich elements, such as NORAD, and promotes their nuclear export by recruiting target RNAs to components of the NXF1-NXT1 RNA export machinery. Specifically recognizes and binds N6-methyladenosine (m6A)-containing mRNAs, promoting their demethylation by ALKBH5. Acts as an molecular adapter, which (1) promotes ALKBH5 recruitment to m6A-containing transcripts and (2) activates ALKBH5 demethylase activity by recruiting SENP1, leading to ALKBH5 deSUMOylation and subsequent activation. The sequence is that of RNA-binding protein 33 from Mus musculus (Mouse).